Consider the following 75-residue polypeptide: MKSSMAILLVMALIIFTLDKNYSTAKDLPSCEKGIHRKVTCKQCNKRSDNDDDYTKCCNSFDAFLMCGFLLSKES.

The N-terminal stretch at 1-23 (MKSSMAILLVMALIIFTLDKNYS) is a signal peptide.

It belongs to the scoloptoxin-03 family. Post-translationally, contains 3 disulfide bonds. Expressed by the venom gland.

The protein localises to the secreted. In terms of biological role, inhibits voltage-gated potassium channels. The sequence is that of Kappa-scoloptoxin(03)-Ssm1e from Scolopendra mutilans (Chinese red-headed centipede).